The primary structure comprises 396 residues: S-arrestin (396 aa).

This sequence belongs to the arrestin family.

Its function is as follows. Arrestin is one of the major proteins of the ros (retinal rod outer segments); it binds to photoactivated-phosphorylated rhodopsin, thereby apparently preventing the transducin-mediated activation of phosphodiesterase. This Aquarana catesbeiana (American bullfrog) protein is S-arrestin.